The chain runs to 373 residues: Chaperone protein DnaJ (373 aa).

The J domain maps to 5–69 (DYYEVLGVNK…NKRVNYDQFG (65 aa)). The segment at 130 to 212 (GTKKEISIKK…CKGKGTENKT (83 aa)) adopts a CR-type zinc-finger fold. Zn(2+)-binding residues include Cys-143, Cys-146, Cys-160, Cys-163, Cys-186, Cys-189, Cys-200, and Cys-203. CXXCXGXG motif repeat units follow at residues 143–150 (CHTCNGDG), 160–167 (CSYCNGAG), 186–193 (CPKCEGSG), and 200–207 (CPTCKGKG).

It belongs to the DnaJ family. In terms of assembly, homodimer. It depends on Zn(2+) as a cofactor.

The protein resides in the cytoplasm. In terms of biological role, participates actively in the response to hyperosmotic and heat shock by preventing the aggregation of stress-denatured proteins and by disaggregating proteins, also in an autonomous, DnaK-independent fashion. Unfolded proteins bind initially to DnaJ; upon interaction with the DnaJ-bound protein, DnaK hydrolyzes its bound ATP, resulting in the formation of a stable complex. GrpE releases ADP from DnaK; ATP binding to DnaK triggers the release of the substrate protein, thus completing the reaction cycle. Several rounds of ATP-dependent interactions between DnaJ, DnaK and GrpE are required for fully efficient folding. Also involved, together with DnaK and GrpE, in the DNA replication of plasmids through activation of initiation proteins. The chain is Chaperone protein DnaJ from Staphylococcus epidermidis (strain ATCC 35984 / DSM 28319 / BCRC 17069 / CCUG 31568 / BM 3577 / RP62A).